The primary structure comprises 269 residues: Formamidopyrimidine-DNA glycosylase (269 aa).

The active-site Schiff-base intermediate with DNA is the proline 2. Glutamate 3 (proton donor) is an active-site residue. Lysine 57 serves as the catalytic Proton donor; for beta-elimination activity. Residues histidine 90, arginine 109, and arginine 150 each contribute to the DNA site. Residues 235–269 (QVYGRAGEACLTCGTTIKRSKHGQRTTFYCPHCQR) form an FPG-type zinc finger. Arginine 259 serves as the catalytic Proton donor; for delta-elimination activity.

Belongs to the FPG family. In terms of assembly, monomer. Requires Zn(2+) as cofactor.

The enzyme catalyses Hydrolysis of DNA containing ring-opened 7-methylguanine residues, releasing 2,6-diamino-4-hydroxy-5-(N-methyl)formamidopyrimidine.. It carries out the reaction 2'-deoxyribonucleotide-(2'-deoxyribose 5'-phosphate)-2'-deoxyribonucleotide-DNA = a 3'-end 2'-deoxyribonucleotide-(2,3-dehydro-2,3-deoxyribose 5'-phosphate)-DNA + a 5'-end 5'-phospho-2'-deoxyribonucleoside-DNA + H(+). Its function is as follows. Involved in base excision repair of DNA damaged by oxidation or by mutagenic agents. Acts as a DNA glycosylase that recognizes and removes damaged bases. Has a preference for oxidized purines, such as 7,8-dihydro-8-oxoguanine (8-oxoG). Has AP (apurinic/apyrimidinic) lyase activity and introduces nicks in the DNA strand. Cleaves the DNA backbone by beta-delta elimination to generate a single-strand break at the site of the removed base with both 3'- and 5'-phosphates. The chain is Formamidopyrimidine-DNA glycosylase from Edwardsiella ictaluri (strain 93-146).